A 465-amino-acid chain; its full sequence is Soluble pyridine nucleotide transhydrogenase (465 aa).

36–45 lines the FAD pocket; the sequence is ERYNNVGGGC.

The protein belongs to the class-I pyridine nucleotide-disulfide oxidoreductase family. The cofactor is FAD.

Its subcellular location is the cytoplasm. It carries out the reaction NAD(+) + NADPH = NADH + NADP(+). Its function is as follows. Conversion of NADPH, generated by peripheral catabolic pathways, to NADH, which can enter the respiratory chain for energy generation. This chain is Soluble pyridine nucleotide transhydrogenase, found in Serratia proteamaculans (strain 568).